Reading from the N-terminus, the 84-residue chain is Sulfur carrier protein TusA (84 aa).

Cysteine 19 (cysteine persulfide intermediate) is an active-site residue.

This sequence belongs to the sulfur carrier protein TusA family. Interacts with IscS.

The protein localises to the cytoplasm. The protein operates within tRNA modification. Functionally, sulfur carrier protein involved in sulfur trafficking in the cell. Part of a sulfur-relay system required for 2-thiolation during synthesis of 2-thiouridine of the modified wobble base 5-methylaminomethyl-2-thiouridine (mnm(5)s(2)U) in tRNA. Interacts with IscS and stimulates its cysteine desulfurase activity. Accepts an activated sulfur from IscS, which is then transferred to TusD, and thus determines the direction of sulfur flow from IscS to 2-thiouridine formation. Also appears to be involved in sulfur transfer for the biosynthesis of molybdopterin. This is Sulfur carrier protein TusA from Sodalis glossinidius (strain morsitans).